The primary structure comprises 108 residues: Replication initiation control protein YabA (108 aa).

The Zn(2+) site is built by His-82, Cys-84, Cys-98, and Cys-101.

Belongs to the YabA family. Homotetramer. Interacts with both DnaA and DnaN, acting as a bridge between these two proteins. Zn(2+) is required as a cofactor.

It localises to the cytoplasm. The protein localises to the nucleoid. Involved in control of chromosome replication initiation. Inhibits the cooperative binding of DnaA to the oriC region, thus negatively regulating initiation of chromosome replication. Inhibits the ability of DnaA-ATP to form a helix on DNA; does not disassemble preformed DnaA-DNA helices. Decreases the residence time of DnaA on the chromosome at its binding sites (oriC, replication forks and promoter-binding sites). Tethers DnaA to the replication machinery via the DNA polymerase beta sliding clamp subunit (dnaN). Associates with oriC and other DnaA targets on the chromosome in a DnaA-dependent manner. In Streptococcus agalactiae serotype Ia (strain ATCC 27591 / A909 / CDC SS700), this protein is Replication initiation control protein YabA.